Reading from the N-terminus, the 428-residue chain is Nucleotidyltransferase MB21D2 (428 aa).

The segment at 366 to 389 (QRRGSTTSIPSPQSDGGDPNQPDD) is disordered. Residues 368–379 (RGSTTSIPSPQS) show a composition bias toward polar residues. At threonine 372 the chain carries Phosphothreonine. Phosphoserine occurs at positions 373, 376, and 379.

It belongs to the mab-21 family.

Probable nucleotidyltransferase that catalyzes the formation of cyclic dinucleotide second messenger in response to some unknown stimulus. This Mus musculus (Mouse) protein is Nucleotidyltransferase MB21D2.